Here is a 122-residue protein sequence, read N- to C-terminus: Fluoride-specific ion channel FluC (122 aa).

4 helical membrane passes run 1–21 (MIGT…SRML), 34–54 (FPYG…LFFS), 60–80 (GVHI…FTTF), and 100–120 (FLNI…GFLI).

It belongs to the fluoride channel Fluc/FEX (TC 1.A.43) family.

It is found in the cell inner membrane. The enzyme catalyses fluoride(in) = fluoride(out). Its function is as follows. Fluoride-specific ion channel. Important for reducing fluoride concentration in the cell, thus reducing its toxicity. The chain is Fluoride-specific ion channel FluC from Campylobacter lari (strain RM2100 / D67 / ATCC BAA-1060).